The sequence spans 116 residues: Large ribosomal subunit protein uL18 (116 aa).

The protein belongs to the universal ribosomal protein uL18 family. Part of the 50S ribosomal subunit; part of the 5S rRNA/L5/L18/L25 subcomplex. Contacts the 5S and 23S rRNAs.

This is one of the proteins that bind and probably mediate the attachment of the 5S RNA into the large ribosomal subunit, where it forms part of the central protuberance. This chain is Large ribosomal subunit protein uL18, found in Pseudomonas aeruginosa (strain UCBPP-PA14).